Consider the following 270-residue polypeptide: Tryptophan synthase alpha chain (270 aa).

Active-site proton acceptor residues include Glu49 and Asp60.

Belongs to the TrpA family. Tetramer of two alpha and two beta chains.

The catalysed reaction is (1S,2R)-1-C-(indol-3-yl)glycerol 3-phosphate + L-serine = D-glyceraldehyde 3-phosphate + L-tryptophan + H2O. The protein operates within amino-acid biosynthesis; L-tryptophan biosynthesis; L-tryptophan from chorismate: step 5/5. The alpha subunit is responsible for the aldol cleavage of indoleglycerol phosphate to indole and glyceraldehyde 3-phosphate. The sequence is that of Tryptophan synthase alpha chain from Buchnera aphidicola subsp. Diuraphis noxia.